The primary structure comprises 760 residues: Catecholate siderophore receptor Fiu (760 aa).

Positions 1–31 are cleaved as a signal peptide; that stretch reads MENNRNFPARQFHSLTFFAGLCIGITPVAQA. The 109-residue stretch at 67–175 folds into the TBDR plug domain; it reads PVADTTRTMT…PTGSINMISK (109 aa). One can recognise a TBDR beta-barrel domain in the interval 180 to 760; it reads DSGIDASASI…TFLLTANMHF (581 aa). The TonB C-terminal box signature appears at 743–760; that stretch reads RYHPGEPRTFLLTANMHF.

The protein belongs to the TonB-dependent receptor family.

It localises to the cell outer membrane. Involved in the active transport across the outer membrane of iron complexed with catecholate siderophores such as dihydroxybenzoylserine and dihydroxybenzoate. It derives its energy for transport by interacting with the trans-periplasmic membrane protein TonB. Can also transport catechol-substituted cephalosporins. Receptor for microcins M, H47 and E492. This is Catecholate siderophore receptor Fiu (fiu) from Escherichia coli O6:H1 (strain CFT073 / ATCC 700928 / UPEC).